A 1517-amino-acid polypeptide reads, in one-letter code: DNA-directed RNA polymerase subunit beta' (1517 aa).

Zn(2+) contacts are provided by cysteine 71, cysteine 73, cysteine 86, and cysteine 89. The Mg(2+) site is built by aspartate 482, aspartate 484, and aspartate 486. Residues cysteine 812, cysteine 886, cysteine 893, and cysteine 896 each contribute to the Zn(2+) site.

The protein belongs to the RNA polymerase beta' chain family. The RNAP catalytic core consists of 2 alpha, 1 beta, 1 beta' and 1 omega subunit. When a sigma factor is associated with the core the holoenzyme is formed, which can initiate transcription. Requires Mg(2+) as cofactor. The cofactor is Zn(2+).

It carries out the reaction RNA(n) + a ribonucleoside 5'-triphosphate = RNA(n+1) + diphosphate. DNA-dependent RNA polymerase catalyzes the transcription of DNA into RNA using the four ribonucleoside triphosphates as substrates. The polypeptide is DNA-directed RNA polymerase subunit beta' (Campylobacter lari (strain RM2100 / D67 / ATCC BAA-1060)).